A 160-amino-acid polypeptide reads, in one-letter code: Ribosomal RNA large subunit methyltransferase H (160 aa).

S-adenosyl-L-methionine is bound by residues leucine 76 and glycine 108.

This sequence belongs to the RNA methyltransferase RlmH family. Homodimer.

Its subcellular location is the cytoplasm. The enzyme catalyses pseudouridine(1915) in 23S rRNA + S-adenosyl-L-methionine = N(3)-methylpseudouridine(1915) in 23S rRNA + S-adenosyl-L-homocysteine + H(+). Specifically methylates the pseudouridine at position 1915 (m3Psi1915) in 23S rRNA. The chain is Ribosomal RNA large subunit methyltransferase H from Rhodopseudomonas palustris (strain HaA2).